Reading from the N-terminus, the 171-residue chain is MSVLQVVLYPDDRLTKVCEPVTQVDDELNQFIDDMFDTMYQEGGIGLAASQVGVLKRVITIDIEGDKTNQVVLINPEILESCGETGIEEGCLSIPGYRALVPRKEKITVKALNRQGEEVIYHADDLFAICIQHEIDHLNGIVFVDHISNLKRQRIKDKMQKLKKQLYRSKA.

2 residues coordinate Fe cation: cysteine 91 and histidine 133. The active site involves glutamate 134. Histidine 137 is a Fe cation binding site.

The protein belongs to the polypeptide deformylase family. The cofactor is Fe(2+).

The catalysed reaction is N-terminal N-formyl-L-methionyl-[peptide] + H2O = N-terminal L-methionyl-[peptide] + formate. Functionally, removes the formyl group from the N-terminal Met of newly synthesized proteins. Requires at least a dipeptide for an efficient rate of reaction. N-terminal L-methionine is a prerequisite for activity but the enzyme has broad specificity at other positions. This chain is Peptide deformylase, found in Haemophilus ducreyi (strain 35000HP / ATCC 700724).